The chain runs to 264 residues: Tropinone reductase homolog At5g06060 (264 aa).

15–39 (LVTGGTRGIGRAVVEELAKFGAKVH) is an NADP(+) binding site. Ser-148 provides a ligand contact to substrate. The active-site Proton acceptor is Tyr-161.

The protein belongs to the short-chain dehydrogenases/reductases (SDR) family. SDR65C subfamily.

The chain is Tropinone reductase homolog At5g06060 from Arabidopsis thaliana (Mouse-ear cress).